The following is a 445-amino-acid chain: Adenylyltransferase and sulfurtransferase MOCS3 (445 aa).

Residues 49-70 (LPPSAAAEVEPTGSPSSSSSAA) form a disordered region. ATP-binding positions include Gly106, Asp127, 134 to 138 (DNLHR), Lys151, and 170 to 171 (NN). Zn(2+) is bound by residues Cys211 and Cys214. Cys228 serves as the catalytic Glycyl thioester intermediate; for adenylyltransferase activity. Residues Cys286 and Cys289 each contribute to the Zn(2+) site. The region spanning 342 to 443 (SGRPHLLVDV…WAKEVDPSFL (102 aa)) is the Rhodanese domain. The Cysteine persulfide intermediate; for sulfurtransferase activity role is filled by Cys403.

The protein in the N-terminal section; belongs to the HesA/MoeB/ThiF family. UBA4 subfamily. Requires Zn(2+) as cofactor.

The protein resides in the cytoplasm. It localises to the cytosol. It carries out the reaction [molybdopterin-synthase sulfur-carrier protein]-C-terminal Gly-Gly + ATP + H(+) = [molybdopterin-synthase sulfur-carrier protein]-C-terminal Gly-Gly-AMP + diphosphate. The catalysed reaction is [molybdopterin-synthase sulfur-carrier protein]-C-terminal Gly-Gly-AMP + S-sulfanyl-L-cysteinyl-[cysteine desulfurase] + AH2 = [molybdopterin-synthase sulfur-carrier protein]-C-terminal-Gly-aminoethanethioate + L-cysteinyl-[cysteine desulfurase] + A + AMP + 2 H(+). Its pathway is tRNA modification; 5-methoxycarbonylmethyl-2-thiouridine-tRNA biosynthesis. The protein operates within cofactor biosynthesis; molybdopterin biosynthesis. Functionally, plays a central role in 2-thiolation of mcm(5)S(2)U at tRNA wobble positions of cytosolic tRNA(Lys), tRNA(Glu) and tRNA(Gln). Also essential during biosynthesis of the molybdenum cofactor. Acts by mediating the C-terminal thiocarboxylation of sulfur carriers URM1 and MOCS2A. Its N-terminus first activates URM1 and MOCS2A as acyl-adenylates (-COAMP), then the persulfide sulfur on the catalytic cysteine is transferred to URM1 and MOCS2A to form thiocarboxylation (-COSH) of their C-terminus. The reaction probably involves hydrogen sulfide that is generated from the persulfide intermediate and that acts as a nucleophile towards URM1 and MOCS2A. Subsequently, a transient disulfide bond is formed. Does not use thiosulfate as sulfur donor; NFS1 probably acting as a sulfur donor for thiocarboxylation reactions. The sequence is that of Adenylyltransferase and sulfurtransferase MOCS3 from Oryza sativa subsp. japonica (Rice).